A 285-amino-acid chain; its full sequence is HTH-type transcriptional regulator MurR (285 aa).

In terms of domain architecture, HTH rpiR-type spans M1 to S77. A DNA-binding region (H-T-H motif) is located at residues S37–Q56. One can recognise an SIS domain in the interval I128–V268.

As to quaternary structure, homotetramer.

It participates in amino-sugar metabolism; N-acetylmuramate degradation [regulation]. Functionally, represses the expression of the murPQ operon involved in the uptake and degradation of N-acetylmuramic acid (MurNAc). Binds to two adjacent inverted repeats within the operator region. MurNAc 6-phosphate, the substrate of MurQ, is the specific inducer that weakens binding of MurR to the operator. In Escherichia coli (strain K12 / MC4100 / BW2952), this protein is HTH-type transcriptional regulator MurR.